A 205-amino-acid polypeptide reads, in one-letter code: Suppressor of IKBKE 1 (205 aa).

Coiled-coil stretches lie at residues 4–32 (TIDK…LIDQ) and 154–192 (KAIQ…ESLR).

The protein belongs to the SIKE family. In terms of assembly, interacts with IKBKE and TBK1 via its coiled coil region. Interaction with TBK1 is disrupted upon viral infection or TLR3 stimulation. Interacts with CDC42BPB. Associates with the STRIPAK core complex composed of PP2A catalytic and scaffolding subunits, the striatins (PP2A regulatory subunits), the striatin-associated proteins MOB4, STRIP1 and STRIP2, PDCD10 and members of the STE20 kinases, such as STK24 and STK26.

The protein resides in the cytoplasm. Suppressor of IKK-epsilon. Associates with the striatin-interacting phosphatase and kinase (STRIPAK) core complex, forming the extended (SIKE1:SLMAP)STRIPAK complex. The (SIKE1:SLMAP)STRIPAK complex dephosphorylates STK3 leading to the inhibition of Hippo signaling and the control of cell growth. This Xenopus laevis (African clawed frog) protein is Suppressor of IKBKE 1 (sike1).